We begin with the raw amino-acid sequence, 571 residues long: Transcription factor ABORTED MICROSPORES (571 aa).

Residues 275 to 284 are compositionally biased toward basic and acidic residues; it reads NDKDMNENGR. 3 disordered regions span residues 275 to 321, 365 to 390, and 536 to 571; these read NDKD…AERR, ELQD…MSLN, and DDHQ…YHNQ. Positions 310–359 constitute a bHLH domain; it reads GSQAKNLMAERRRRKKLNDRLYALRSLVPRITKLDRASILGDAINYVKEL. Residues 368 to 378 show a composition bias toward acidic residues; sequence DELEENSETED. The span at 381-390 shows a compositional bias: polar residues; that stretch reads NRPQGGMSLN. The segment covering 556–571 has biased composition (basic residues); that stretch reads AHHHHHHQHINHYHNQ.

As to quaternary structure, homodimer. Interacts with ASHR3. In terms of tissue distribution, mostly expressed in closed, post-meiotic buds, and, to a lower extent, in pre-meiotic buds. Detected in leaves, stems, and flowers.

The protein resides in the nucleus. Transcription factor. Plays a crucial role in tapetum development. Required for male fertility and pollen differentiation, especially during the post-meiotic transcriptional regulation of microspore development within the developing anther. Binds E-box regions in the AHL16/TEK promoter. This chain is Transcription factor ABORTED MICROSPORES (AMS), found in Arabidopsis thaliana (Mouse-ear cress).